The sequence spans 256 residues: Isoprenyl transferase (256 aa).

Asp33 is an active-site residue. Asp33 contributes to the Mg(2+) binding site. Substrate-binding positions include 34–37 (GNGR), Trp38, Arg46, His50, and 78–80 (STE). Asn81 (proton acceptor) is an active-site residue. Residues Trp82, Arg84, Arg201, and 207–209 (RIS) contribute to the substrate site. Glu220 is a binding site for Mg(2+).

This sequence belongs to the UPP synthase family. In terms of assembly, homodimer. It depends on Mg(2+) as a cofactor.

Functionally, catalyzes the condensation of isopentenyl diphosphate (IPP) with allylic pyrophosphates generating different type of terpenoids. The chain is Isoprenyl transferase from Staphylococcus haemolyticus (strain JCSC1435).